Here is a 4998-residue protein sequence, read N- to C-terminus: SCO-spondin (4998 aa).

The N-terminal stretch at 1–17 is a signal peptide; that stretch reads MLPLALLFGMLWTQANG. The 85-residue stretch at 18-102 folds into the EMI domain; sequence HWCEQIETVH…ACCPGWGGAH (85 aa). A VWFD 1 domain is found at 72-241; sequence GLCAIYKPPE…KLPGSEPGCL (170 aa). Intrachain disulfides connect Cys-74–Cys-202 and Cys-103–Cys-240. N-linked (GlcNAc...) asparagine glycosylation is found at Asn-88 and Asn-130. The TIL 1 domain occupies 349–404; the sequence is CPGGQLYSDCVSSCPPSCSAVAQGEEGSCGKECVSGCECPTGLFWDGALCVPAAHC. Residues 404-496 enclose the VWFC 1 domain; that stretch reads CPCYHRRQRY…HGACDTGSCL (93 aa). Positions 442–615 constitute a VWFD 2 domain; the sequence is AECAVGGDGH…FQVSGDGRCP (174 aa). Intrachain disulfides connect Cys-444-Cys-577 and Cys-468-Cys-614. 2 N-linked (GlcNAc...) asparagine glycosylation sites follow: Asn-534 and Asn-698. In terms of domain architecture, TIL 2 spans 706–759; that stretch reads CPGGQVYQECAPVCGHHCGEPEDCKELGICVAGCNCPPGLLWDLEGQCVPPSMC. Asn-771, Asn-790, Asn-824, and Asn-866 each carry an N-linked (GlcNAc...) asparagine glycan. The region spanning 892–1062 is the VWFD 3 domain; that stretch reads GWCQASGAPH…HSWRLNPLCP (171 aa). Cystine bridges form between Cys-894/Cys-1026, Cys-916/Cys-1061, and Cys-937/Cys-944. The region spanning 1153–1209 is the TIL 3 domain; sequence CEGGQVYEPCGSTCPPTCHDHHSELRWHCQVITCVEGCFCPEGTLLHGGACMKLAAC. Asn-1230 carries N-linked (GlcNAc...) asparagine glycosylation. LDL-receptor class A domains follow at residues 1253–1290, 1293–1328, 1329–1365, and 1369–1407; these read GCAE…EGCA, VCGE…EQGC, LCPH…ESCL, and SCIS…SHCS. Cystine bridges form between Cys-1254–Cys-1267, Cys-1261–Cys-1280, Cys-1274–Cys-1289, Cys-1294–Cys-1306, Cys-1301–Cys-1319, Cys-1313–Cys-1328, Cys-1330–Cys-1342, Cys-1337–Cys-1355, Cys-1349–Cys-1364, Cys-1370–Cys-1382, Cys-1377–Cys-1395, and Cys-1389–Cys-1406. The tract at residues 1406–1440 is disordered; that stretch reads CSLPSLPTPPGGIGQNPSTSSLDTAPSPVGSTSPA. The span at 1420-1440 shows a compositional bias: polar residues; the sequence is QNPSTSSLDTAPSPVGSTSPA. LDL-receptor class A domains lie at 1442–1478 and 1480–1519; these read PCSL…LDCG and PCML…DVCE. Intrachain disulfides connect Cys-1443–Cys-1455, Cys-1450–Cys-1468, Cys-1462–Cys-1477, Cys-1481–Cys-1494, Cys-1488–Cys-1507, and Cys-1501–Cys-1518. Asn-1528 carries an N-linked (GlcNAc...) asparagine glycan. Positions 1533–1571 constitute an LDL-receptor class A 7 domain; the sequence is PCPEFSCPDGTCIDFLLVCDGNPDCELADETEPSLDEQG. 9 disulfides stabilise this stretch: Cys-1534/Cys-1544, Cys-1539/Cys-1557, Cys-1551/Cys-1572, Cys-1584/Cys-1620, Cys-1588/Cys-1625, Cys-1599/Cys-1610, Cys-1640/Cys-1680, Cys-1644/Cys-1685, and Cys-1654/Cys-1664. 2 TSP type-1 domains span residues 1572–1626 and 1628–1686; these read CGAW…EACP and DGEW…EGCL. Asn-1598 carries N-linked (GlcNAc...) asparagine glycosylation. Residue Asn-1687 is glycosylated (N-linked (GlcNAc...) asparagine). The TIL 4 domain occupies 1692-1746; the sequence is GELVFRTCAPCPLTCDDISGQAACPPDRPCSSPGCWCPDGKVLNTEGQCVRPRQC. EGF-like domains follow at residues 1702 to 1741 and 1742 to 1768; these read CPLT…GQCV and RPRQ…CQLC. The TSP type-1 3 domain maps to 1771 to 1827; the sequence is DCGWSSWSPWAECLGPCSSQSLQWSFRSPNNPRLSGHGRQCRGIHRKARRCQTEACE. 3 disulfides stabilise this stretch: Cys-1772–Cys-1811, Cys-1783–Cys-1787, and Cys-1821–Cys-1826. A VWFC 2 domain is found at 1827–1887; it reads EGCEQWGLMY…GMGESCCHCA (61 aa). 2 N-linked (GlcNAc...) asparagine glycosylation sites follow: Asn-1892 and Asn-1989. The F5/8 type C domain occupies 1929–2085; sequence CYSPLGLAGL…IFLWVELLGL (157 aa). In terms of domain architecture, LDL-receptor class A 8 spans 2091–2127; sequence LCPGSRHRCASGECAPKGGPCDGAVDCDDGSDEEGCG. Disulfide bonds link Cys-2092–Cys-2104, Cys-2099–Cys-2117, and Cys-2111–Cys-2126. The segment at 2119–2209 is disordered; it reads DGSDEEGCGS…TFPPGAKSLH (91 aa). Residues 2130–2144 are compositionally biased toward polar residues; it reads HASTTSRTPALSPTQ. The span at 2148–2158 shows a compositional bias: basic and acidic residues; the sequence is FPREVSEDLRQ. 2 stretches are compositionally biased toward polar residues: residues 2164–2173 and 2190–2201; these read TSHSPPSSGE and QPMQTLSATSTF. LDL-receptor class A domains lie at 2242–2278 and 2299–2335; these read PCGP…QHCA and LCSP…DNCV. 12 disulfide bridges follow: Cys-2243–Cys-2255, Cys-2250–Cys-2268, Cys-2262–Cys-2277, Cys-2300–Cys-2312, Cys-2307–Cys-2325, Cys-2319–Cys-2334, Cys-2337–Cys-2373, Cys-2348–Cys-2352, Cys-2383–Cys-2388, Cys-2403–Cys-2440, Cys-2407–Cys-2445, and Cys-2418–Cys-2430. TSP type-1 domains lie at 2336–2389 and 2391–2446; these read DCVL…QACP and AGAW…QLCP. Residues 2468-2511 form the TIL 5 domain; that stretch reads VPPCPPSCLDPEANRSCSGHCMEGCRCPPGLLLQDSHCLPLSEC. 2 N-linked (GlcNAc...) asparagine glycosylation sites follow: Asn-2481 and Asn-2530. TSP type-1 domains lie at 2551–2605, 2609–2664, and 2666–2719; these read SCGW…TDCG, PGWT…PVCP, and PSAW…HPCT. Intrachain disulfides connect Cys-2552–Cys-2590, Cys-2563–Cys-2567, Cys-2600–Cys-2604, Cys-2620–Cys-2658, Cys-2624–Cys-2663, Cys-2640–Cys-2648, Cys-2678–Cys-2713, Cys-2682–Cys-2718, and Cys-2693–Cys-2703. Residues Asn-2772 and Asn-2802 are each glycosylated (N-linked (GlcNAc...) asparagine). 2 TSP type-1 domains span residues 2820 to 2875 and 2876 to 2919; these read ACGW…RPCR and GPGA…QPCA. 3 cysteine pairs are disulfide-bonded: Cys-2821-Cys-2859, Cys-2832-Cys-2836, and Cys-2869-Cys-2874. 4 N-linked (GlcNAc...) asparagine glycosylation sites follow: Asn-2897, Asn-2952, Asn-2999, and Asn-3009. Positions 2926 to 2978 constitute a TIL 6 domain; sequence CPEDQQWLDCAQGPASCAHLSIPGEANQTCHPGCYCLSGMLLLNNVCVPVQDC. 2 TSP type-1 domains span residues 3019-3086 and 3088-3143; these read QPAW…PGCN and AGGW…QPCP. 6 cysteine pairs are disulfide-bonded: Cys-3031/Cys-3080, Cys-3035/Cys-3085, Cys-3046/Cys-3070, Cys-3100/Cys-3137, Cys-3104/Cys-3142, and Cys-3115/Cys-3127. N-linked (GlcNAc...) asparagine glycosylation is present at Asn-3146. Residues 3151–3201 form the TIL 7 domain; it reads EGAEYSPCGPPCPRSCDDLVHCVWRCQPGCYCPLGKVLSADGAICVKPSYC. A glycan (N-linked (GlcNAc...) asparagine) is linked at Asn-3235. 2 TSP type-1 domains span residues 3244–3306 and 3308–3363; these read SGDW…TACP and DGAW…TLCT. 6 cysteine pairs are disulfide-bonded: Cys-3256–Cys-3299, Cys-3260–Cys-3305, Cys-3271–Cys-3283, Cys-3320–Cys-3355, Cys-3323–Cys-3362, and Cys-3333–Cys-3345. Asn-3301 carries N-linked (GlcNAc...) asparagine glycosylation. Asn-3357 carries an N-linked (GlcNAc...) asparagine glycan. Residues 3365-3421 form the TIL 8 domain; sequence CGGGQDLLPCGQPCPHSCQDLSLGSTCQPGSAGCQSGCGCPPGQLSQDGLCVFPVDC. Asn-3435 and Asn-3462 each carry an N-linked (GlcNAc...) asparagine glycan. A TSP type-1 15 domain is found at 3481–3529; that stretch reads PGIWSSWGPWEKCSVSCGGGEQLRSRQCARPPCPGLAQQSRICHIHVCR. 3 disulfide bridges follow: Cys-3493–Cys-3523, Cys-3497–Cys-3528, and Cys-3508–Cys-3513. An N-linked (GlcNAc...) asparagine glycan is attached at Asn-3638. TSP type-1 domains follow at residues 3657–3713, 3727–3779, 3793–3849, and 3851–3906; these read HGSF…PECP, AGGW…PSCA, NCFW…RACP, and PGGW…MPCE. 3 cysteine pairs are disulfide-bonded: Cys-3669/Cys-3707, Cys-3673/Cys-3712, and Cys-3685/Cys-3697. The N-linked (GlcNAc...) asparagine glycan is linked to Asn-3761. 6 disulfides stabilise this stretch: Cys-3794–Cys-3830, Cys-3805–Cys-3809, Cys-3843–Cys-3848, Cys-3863–Cys-3900, Cys-3867–Cys-3905, and Cys-3878–Cys-3890. Residues 3909–3964 enclose the TIL 9 domain; sequence CPAGMEMVSCANHCPYSCSDLQEGGMCQEDQACQLGCRCSEGFLEQDGGCVPVGHC. Asn-3986 carries N-linked (GlcNAc...) asparagine glycosylation. 4 TSP type-1 domains span residues 4006-4059, 4100-4155, 4157-4213, and 4215-4269; these read HCAW…VPCP, PRGW…QLCL, KLER…GPCQ, and DCTW…GNCS. Disulfide bonds link Cys-4007–Cys-4043, Cys-4018–Cys-4022, Cys-4053–Cys-4058, Cys-4112–Cys-4149, Cys-4116–Cys-4154, Cys-4127–Cys-4139, Cys-4169–Cys-4207, Cys-4173–Cys-4212, Cys-4184–Cys-4195, Cys-4216–Cys-4253, Cys-4227–Cys-4229, and Cys-4263–Cys-4268. Residue Asn-4196 is glycosylated (N-linked (GlcNAc...) asparagine). A glycan (N-linked (GlcNAc...) asparagine) is linked at Asn-4267. The 56-residue stretch at 4273-4328 folds into the TIL 10 domain; sequence CPPPFEFQSCGSPCAGLCATHLNHRLCQDLPPCQPGCYCPKGLLEQAGSCILPEQC. 2 N-linked (GlcNAc...) asparagine glycosylation sites follow: Asn-4408 and Asn-4463. The TSP type-1 24 domain maps to 4465–4516; the sequence is TCQWGPWGPWSPCQMPCSGGFKLRWRVARDTSAGECPGPWAQTESCNMGSCP. Disulfide bonds link Cys-4466/Cys-4500, Cys-4477/Cys-4481, and Cys-4510/Cys-4515. Residues 4530–4576 enclose the TIL 11 domain; the sequence is DCANQCPRSCADLWDGVQCLQGPCSPGCRCPPGQLVQDGHCVPISSC. 3 N-linked (GlcNAc...) asparagine glycosylation sites follow: Asn-4584, Asn-4601, and Asn-4606. Residues 4616–4669 form the TSP type-1 25 domain; that stretch reads CPVLGPWSAWSECSAVCGKGTMVRHRSCEEHPDREPCQALDLQQWQECNLQACP. Cystine bridges form between Cys-4628/Cys-4663, Cys-4632/Cys-4668, and Cys-4643/Cys-4652. Residues 4671 to 4725 enclose the TIL 12 domain; sequence CPPGQVLSTCATMCPSLCSHLWPGTICVREPCQLGCGCPGGQLLYNGTCIPPEAC. 4 N-linked (GlcNAc...) asparagine glycosylation sites follow: Asn-4716, Asn-4756, Asn-4799, and Asn-4806. The TIL 13 domain occupies 4777-4835; the sequence is CAPGEIWQHGKLGPCEKTCPEMNMTQAWSNCTEAQAPGCVCQLGYFRSQTGLCVPEDHC. Positions 4835–4893 constitute a VWFC 3 domain; sequence CECWHHGSPHLPGSEWQEACESCRCLHGKSVCIRHCPELSCAQGEVIMQEPGSCCPICQ. Disulfide bonds link Cys-4892/Cys-4952, Cys-4918/Cys-4969, Cys-4928/Cys-4985, and Cys-4932/Cys-4987. In terms of domain architecture, CTCK spans 4892-4991; sequence CQQDTLKEEP…IHSCQCSACQ (100 aa). N-linked (GlcNAc...) asparagine glycosylation is present at Asn-4912.

The protein belongs to the thrombospondin family. In terms of tissue distribution, subcommissural organ.

It is found in the secreted. The protein localises to the extracellular space. Its function is as follows. Involved in the modulation of neuronal aggregation. May be involved in developmental events during the formation of the central nervous system. This is SCO-spondin from Mus musculus (Mouse).